The sequence spans 102 residues: Cuticle protein 10.9 (102 aa).

Q1 carries the pyrrolidone carboxylic acid modification. A disordered region spans residues 1–45 (QLAEQYPPHPYSFSYDATDETGARISTSESGDESNSKTGSYSYQT). Residues 8 to 74 (PHPYSFSYDA…SIDTNEPGTK (67 aa)) enclose the Chitin-binding type R&amp;R domain. Residues 36-45 (SKTGSYSYQT) are compositionally biased toward polar residues.

Component of the cuticle of the tick. Binds chitin. The sequence is that of Cuticle protein 10.9 from Ixodes ricinus (Common tick).